We begin with the raw amino-acid sequence, 271 residues long: MKLVFYGAGNMAHAIFTGIVNSKVIDSNDIYLTNRSNEVALKEYAEKLGVNYSYDDEALLKAADYVFLGTKPYDFESLAERIKPFITDKNKFISIMAGLPISYIREKLEADNPIARIMPNTNAHVGHSVTGISFSSNFGPNSKDEVDELINAFGSAIEVPEDNLHQVTAITGSGPAFLYHVFEQYVTAGTRLGLEKAQVEESIRNLIIGTSKMIERSELSMEQLRKNITSKGGTTQAGLNALSQHDLESVFEDCLRAAVDRSVELSSQDED.

This sequence belongs to the pyrroline-5-carboxylate reductase family.

The protein localises to the cytoplasm. It catalyses the reaction L-proline + NADP(+) = (S)-1-pyrroline-5-carboxylate + NADPH + 2 H(+). It carries out the reaction L-proline + NAD(+) = (S)-1-pyrroline-5-carboxylate + NADH + 2 H(+). The protein operates within amino-acid biosynthesis; L-proline biosynthesis; L-proline from L-glutamate 5-semialdehyde: step 1/1. Functionally, catalyzes the reduction of 1-pyrroline-5-carboxylate (PCA) to L-proline. This chain is Pyrroline-5-carboxylate reductase, found in Staphylococcus saprophyticus subsp. saprophyticus (strain ATCC 15305 / DSM 20229 / NCIMB 8711 / NCTC 7292 / S-41).